Consider the following 322-residue polypeptide: Probable cell division protein WhiA (322 aa).

A DNA-binding region (H-T-H motif) is located at residues S279–S312.

It belongs to the WhiA family.

Functionally, involved in cell division and chromosome segregation. This is Probable cell division protein WhiA from Desulforamulus reducens (strain ATCC BAA-1160 / DSM 100696 / MI-1) (Desulfotomaculum reducens).